A 962-amino-acid chain; its full sequence is Translation initiation factor IF-2 (962 aa).

The segment at 99-366 is disordered; that stretch reads VKAAQTQAAP…KKGKKLKLEP (268 aa). Positions 117 to 141 are enriched in basic and acidic residues; sequence DAAKARAEAAARAEARAKAEAEAAK. The span at 145-155 shows a compositional bias: low complexity; that stretch reads AKAGNKAKPAA. Residues 173–216 are compositionally biased toward basic and acidic residues; the sequence is KPAEESKAEKAQADKMPSEKPAEPKEKAAKPKHERNGKGKDAKK. The segment covering 219–234 has biased composition (low complexity); it reads KPAAPAVPQPVVSAEE. Basic and acidic residues predominate over residues 235-269; sequence QAQRDEEARRAAALRAHQEALLKEKQERQARREAM. A compositionally biased stretch (low complexity) spans 270-283; that stretch reads KQQAEQQAKAAQEA. Basic and acidic residues-rich tracts occupy residues 314–327 and 338–354; these read AKKE…DEGQ and GGRD…ERVR. The region spanning 462-631 is the tr-type G domain; sequence PRPPVVTVMG…LLEAEVLELT (170 aa). A G1 region spans residues 471–478; it reads GHVDHGKT. 471–478 is a binding site for GTP; sequence GHVDHGKT. Residues 496 to 500 are G2; the sequence is GITQH. The tract at residues 517–520 is G3; it reads DTPG. GTP contacts are provided by residues 517–521 and 571–574; these read DTPGH and NKID. The G4 stretch occupies residues 571–574; that stretch reads NKID. Residues 607–609 are G5; that stretch reads SAK.

It belongs to the TRAFAC class translation factor GTPase superfamily. Classic translation factor GTPase family. IF-2 subfamily.

Its subcellular location is the cytoplasm. One of the essential components for the initiation of protein synthesis. Protects formylmethionyl-tRNA from spontaneous hydrolysis and promotes its binding to the 30S ribosomal subunits. Also involved in the hydrolysis of GTP during the formation of the 70S ribosomal complex. The sequence is that of Translation initiation factor IF-2 from Neisseria meningitidis serogroup B (strain ATCC BAA-335 / MC58).